Here is a 698-residue protein sequence, read N- to C-terminus: Capon-like protein (698 aa).

A PID domain is found at 25-194 (FFHGITFQAK…SELLDVEQIS (170 aa)). The tract at residues 191–240 (EQISEQQLSEDGERGGGDNETPKKEHLAITPDLNHTQPQRPNHLDIMPSH) is disordered. A compositionally biased stretch (basic and acidic residues) spans 201 to 217 (DGERGGGDNETPKKEHL). Coiled-coil stretches lie at residues 265 to 327 (RSEI…LASL), 379 to 484 (NQQL…LNAN), and 554 to 583 (LNED…GNLA). The span at 396 to 423 (SQHLQNLQQQQQQQQQQQQQQTQAAPTA) shows a compositional bias: low complexity. The segment at 396–460 (SQHLQNLQQQ…QQQQQQQQDA (65 aa)) is disordered. Positions 436–447 (YPSMSALQSISN) are enriched in polar residues. Positions 448–458 (QLQQQQQQQQQ) are enriched in low complexity. A disordered region spans residues 588 to 698 (GGSTSTRDTS…RTTWARHTTK (111 aa)). Positions 590–640 (STSTRDTSRSSSTLDSPSSPRLRSSNNNISPGSSNGNQNHNNNSNSNSSSS) are enriched in low complexity. Polar residues-rich tracts occupy residues 662 to 672 (LSATPSFITRS) and 679 to 698 (NRSQ…HTTK).

Expressed at higher level in wing imaginal disk.

In terms of biological role, putative adapter protein. The polypeptide is Capon-like protein (Drosophila melanogaster (Fruit fly)).